Consider the following 306-residue polypeptide: MSEGRTDGDTWGPAQSVGATATMVAAARAVASQGPDALLDDPLAEPLVRAVGLDPFIRIVEGKLDFPDDPLFNRRARAEQITVRTRFFDDFFIDATEAGLRQAVILASGLDTRAYRLTWPAGTVVYEIDQPQVIAFKTDTLANLGAAPTAERRTISIDLRDDWPAALREGGFDVTRPTAWSAEGLLPYLPPEAQDRLFDNITALSAPGSRLATEHVPDPNAFSDERLARISERWQRLGLNLNAADLFYRGERNVVADYLTGKGWRVTPHPARQLYARNGFEFPEDEMRATFGEMSYVDATLTGGRG.

S-adenosyl-L-methionine-binding positions include D129 and 158-159; that span reads DL.

The protein belongs to the UPF0677 family.

In terms of biological role, exhibits S-adenosyl-L-methionine-dependent methyltransferase activity. This chain is Putative S-adenosyl-L-methionine-dependent methyltransferase MAP_4190c, found in Mycolicibacterium paratuberculosis (strain ATCC BAA-968 / K-10) (Mycobacterium paratuberculosis).